A 394-amino-acid polypeptide reads, in one-letter code: Envelope glycoprotein D (394 aa).

Residues 1–25 (MGGAAARLGAVILFVVIVGLHGVRG) form the signal peptide. Residues 26-57 (KYALADASLKMADPNRFRGKDLPVLDQLTDPP) are interaction with TNFRSF14. The Virion surface segment spans residues 26-340 (KYALADASLK…YHPPATPNNM (315 aa)). His64 lines the Zn(2+) pocket. Disulfide bonds link Cys91–Cys214, Cys131–Cys227, and Cys143–Cys152. Residues Asn119 and Asn146 are each glycosylated (N-linked (GlcNAc...) asparagine; by host). Asp240 serves as a coordination point for Zn(2+). The tract at residues 261–305 (LKIAGWHGPKAPYTSTLLPPELSETPNATQPELAPEDPEDSALLE) is profusion. The interval 275 to 301 (STLLPPELSETPNATQPELAPEDPEDS) is disordered. The N-linked (GlcNAc...) asparagine; by host glycan is linked to Asn287. Residues 341–361 (GLIAGAVGGSLLAALVICGIV) traverse the membrane as a helical segment. At 362–394 (YWMHRRTRKAPKRIRLPHIREDDQPSSHQPLFY) the chain is on the intravirion side.

It belongs to the herpesviridae glycoprotein D family. Homodimer. Interacts with host receptor TNFRSF14. Interacts with host receptor NECTIN1. Mutant Rid1 interacts with host receptor NECTIN2. Interacts (via profusion domain) with gB; this interaction occurs in the absence of gH/gL. Interacts (via profusion domain) with gH/gL heterodimer; this interaction occurs in the absence of gB. Associates with the gB-gH/gL-gD complex. Interacts (via C-terminus) with UL11 tegument protein. Interacts (via C-terminus) with VP22 tegument protein; this interaction might be very weak. Interacts with host RSAD2.

The protein resides in the virion membrane. The protein localises to the host Golgi apparatus. Its function is as follows. Envelope glycoprotein that binds to the host cell entry receptors NECTIN1, TNFRSF14/HVEM and 3-O-sulfated heparan sulfate, promoting the virus entry into host cells. May trigger fusion with host membrane, by recruiting the fusion machinery composed of gB and gH/gL. The chain is Envelope glycoprotein D (gD) from Human herpesvirus 1 (strain KOS) (HHV-1).